The chain runs to 204 residues: 3-isopropylmalate dehydratase small subunit (204 aa).

Belongs to the LeuD family. LeuD type 1 subfamily. Heterodimer of LeuC and LeuD.

The catalysed reaction is (2R,3S)-3-isopropylmalate = (2S)-2-isopropylmalate. The protein operates within amino-acid biosynthesis; L-leucine biosynthesis; L-leucine from 3-methyl-2-oxobutanoate: step 2/4. Its function is as follows. Catalyzes the isomerization between 2-isopropylmalate and 3-isopropylmalate, via the formation of 2-isopropylmaleate. The protein is 3-isopropylmalate dehydratase small subunit of Roseiflexus sp. (strain RS-1).